Reading from the N-terminus, the 114-residue chain is Large ribosomal subunit protein bL20 (114 aa).

It belongs to the bacterial ribosomal protein bL20 family.

Its function is as follows. Binds directly to 23S ribosomal RNA and is necessary for the in vitro assembly process of the 50S ribosomal subunit. It is not involved in the protein synthesizing functions of that subunit. The protein is Large ribosomal subunit protein bL20 of Anaeromyxobacter dehalogenans (strain 2CP-C).